Here is a 275-residue protein sequence, read N- to C-terminus: Protein CIMAP1C (275 aa).

STPGR repeat units lie at residues 200-225 (PGPA…MAKR) and 236-261 (PGPG…MGIK).

This sequence belongs to the CIMAP family.

The polypeptide is Protein CIMAP1C (CIMAP1C) (Mus musculus (Mouse)).